We begin with the raw amino-acid sequence, 560 residues long: DNA ligase B (560 aa).

The N6-AMP-lysine intermediate role is filled by lysine 124.

This sequence belongs to the NAD-dependent DNA ligase family. LigB subfamily.

The enzyme catalyses NAD(+) + (deoxyribonucleotide)n-3'-hydroxyl + 5'-phospho-(deoxyribonucleotide)m = (deoxyribonucleotide)n+m + AMP + beta-nicotinamide D-nucleotide.. In terms of biological role, catalyzes the formation of phosphodiester linkages between 5'-phosphoryl and 3'-hydroxyl groups in double-stranded DNA using NAD as a coenzyme and as the energy source for the reaction. The chain is DNA ligase B from Shigella sonnei (strain Ss046).